The chain runs to 349 residues: 4-hydroxy-tetrahydrodipicolinate reductase 2, chloroplastic (349 aa).

The N-terminal 53 residues, 1–53 (MAANGLMAASSVFLHRPVHPHFSFSSRTNQMVPLGFKGRVSFIGNVKRCFPVV), are a transit peptide targeting the chloroplast. NAD(+)-binding positions include 81–86 (GCSGKM), 173–175 (GTT), and 196–199 (SPQM). The active-site Proton donor/acceptor is His232. Residue Lys236 is the Proton donor of the active site. 241 to 242 (GT) serves as a coordination point for (S)-2,3,4,5-tetrahydrodipicolinate.

The protein belongs to the DapB family.

Its subcellular location is the plastid. It localises to the chloroplast. It carries out the reaction (S)-2,3,4,5-tetrahydrodipicolinate + NAD(+) + H2O = (2S,4S)-4-hydroxy-2,3,4,5-tetrahydrodipicolinate + NADH + H(+). The enzyme catalyses (S)-2,3,4,5-tetrahydrodipicolinate + NADP(+) + H2O = (2S,4S)-4-hydroxy-2,3,4,5-tetrahydrodipicolinate + NADPH + H(+). It participates in amino-acid biosynthesis; L-lysine biosynthesis via DAP pathway; (S)-tetrahydrodipicolinate from L-aspartate: step 4/4. Functionally, catalyzes the conversion of 4-hydroxy-tetrahydrodipicolinate (HTPA) to tetrahydrodipicolinate. This Arabidopsis thaliana (Mouse-ear cress) protein is 4-hydroxy-tetrahydrodipicolinate reductase 2, chloroplastic (DAPB2).